A 581-amino-acid chain; its full sequence is Proline--tRNA ligase 1 (581 aa).

Belongs to the class-II aminoacyl-tRNA synthetase family. ProS type 1 subfamily. As to quaternary structure, homodimer.

Its subcellular location is the cytoplasm. It carries out the reaction tRNA(Pro) + L-proline + ATP = L-prolyl-tRNA(Pro) + AMP + diphosphate. Functionally, catalyzes the attachment of proline to tRNA(Pro) in a two-step reaction: proline is first activated by ATP to form Pro-AMP and then transferred to the acceptor end of tRNA(Pro). As ProRS can inadvertently accommodate and process non-cognate amino acids such as alanine and cysteine, to avoid such errors it has two additional distinct editing activities against alanine. One activity is designated as 'pretransfer' editing and involves the tRNA(Pro)-independent hydrolysis of activated Ala-AMP. The other activity is designated 'posttransfer' editing and involves deacylation of mischarged Ala-tRNA(Pro). The misacylated Cys-tRNA(Pro) is not edited by ProRS. In Rhodococcus jostii (strain RHA1), this protein is Proline--tRNA ligase 1.